The primary structure comprises 224 residues: MELGLAEPTALSHCLRPRWQSAWWPTLAVLALLSCVTEASLDPMSRSPAARDGPSPVLAPPTDHLPGGHTAHLCSERTLRPPPQSPQPAPPPPGPALQSPPAALRGARAARAGTRSSRARTTDARGCRLRSQLVPVSALGLGHSSDELIRFRFCSGSCRRARSQHDLSLASLLGAGALRSPPGSRPISQPCCRPTRYEAVSFMDVNSTWRTVDHLSATACGCLG.

The first 39 residues, 1–39 (MELGLAEPTALSHCLRPRWQSAWWPTLAVLALLSCVTEA), serve as a signal peptide directing secretion. Residues 40 to 111 (SLDPMSRSPA…AALRGARAAR (72 aa)) constitute a propeptide that is removed on maturation. Positions 43–124 (PMSRSPAARD…RSSRARTTDA (82 aa)) are disordered. Residues 80-95 (RPPPQSPQPAPPPPGP) show a composition bias toward pro residues. Over residues 96-116 (ALQSPPAALRGARAARAGTRS) the composition is skewed to low complexity. Disulfide bonds link Cys-127-Cys-192, Cys-154-Cys-220, and Cys-158-Cys-222. N-linked (GlcNAc...) asparagine glycosylation occurs at Asn-206.

Belongs to the TGF-beta family. GDNF subfamily. As to quaternary structure, homodimer; disulfide-linked. Interacts with GFRA3 coreceptor and RET: forms a 2:2:2 ternary complex composed of ARTN ligand, GFRA3 and RET receptor.

It is found in the secreted. Functionally, growth factor that supports the survival of sensory and sympathetic peripheral neurons in culture and also supports the survival of dopaminergic neurons of the ventral mid-brain. Acts by binding to its coreceptor, GFRA3, leading to autophosphorylation and activation of the RET receptor. Strong attractant of gut hematopoietic cells thus promoting the formation Peyer's patch-like structures, a major component of the gut-associated lymphoid tissue. The chain is Artemin from Mus musculus (Mouse).